Consider the following 162-residue polypeptide: Ecotin (162 aa).

A signal peptide spans Met-1–Ala-18. A disulfide bond links Cys-70 and Cys-107.

Belongs to the protease inhibitor I11 (ecotin) family. As to quaternary structure, homodimer.

It is found in the periplasm. In terms of biological role, general inhibitor of pancreatic serine proteases: inhibits chymotrypsin, trypsin, elastases, factor X, kallikrein as well as a variety of other proteases. The polypeptide is Ecotin (Salmonella arizonae (strain ATCC BAA-731 / CDC346-86 / RSK2980)).